Consider the following 87-residue polypeptide: Probable Fe(2+)-trafficking protein (87 aa).

The protein belongs to the Fe(2+)-trafficking protein family.

Functionally, could be a mediator in iron transactions between iron acquisition and iron-requiring processes, such as synthesis and/or repair of Fe-S clusters in biosynthetic enzymes. This Francisella tularensis subsp. holarctica (strain FTNF002-00 / FTA) protein is Probable Fe(2+)-trafficking protein.